We begin with the raw amino-acid sequence, 208 residues long: Small ribosomal subunit protein uS4B (208 aa).

Residues 95 to 160 (KRLDNVVFRL…NQVYMAAKQA (66 aa)) form the S4 RNA-binding domain.

The protein belongs to the universal ribosomal protein uS4 family. As to quaternary structure, part of the 30S ribosomal subunit. Contacts protein S5. The interaction surface between S4 and S5 is involved in control of translational fidelity.

In terms of biological role, one of the primary rRNA binding proteins, it binds directly to 16S rRNA where it nucleates assembly of the body of the 30S subunit. With S5 and S12 plays an important role in translational accuracy. This Bdellovibrio bacteriovorus (strain ATCC 15356 / DSM 50701 / NCIMB 9529 / HD100) protein is Small ribosomal subunit protein uS4B.